Here is a 40-residue protein sequence, read N- to C-terminus: U1-ectatotoxin-Eb1a subunit A (40 aa).

It belongs to the ectatomin family. Ectatomin-Eq subfamily. In terms of assembly, heterodimer of subunits A and B; disulfide-linked. Expressed by the venom gland.

It is found in the secreted. It localises to the target cell membrane. The protein is U1-ectatotoxin-Eb1a subunit A of Ectatomma brunneum (Ant).